The sequence spans 79 residues: DNA-directed RNA polymerase subunit omega (79 aa).

Belongs to the RNA polymerase subunit omega family. In terms of assembly, the RNAP catalytic core consists of 2 alpha, 1 beta, 1 beta' and 1 omega subunit. When a sigma factor is associated with the core the holoenzyme is formed, which can initiate transcription.

The enzyme catalyses RNA(n) + a ribonucleoside 5'-triphosphate = RNA(n+1) + diphosphate. Functionally, promotes RNA polymerase assembly. Latches the N- and C-terminal regions of the beta' subunit thereby facilitating its interaction with the beta and alpha subunits. In Kosmotoga olearia (strain ATCC BAA-1733 / DSM 21960 / TBF 19.5.1), this protein is DNA-directed RNA polymerase subunit omega.